The primary structure comprises 389 residues: Acetylornithine deacetylase (389 aa).

H85 is a Zn(2+) binding site. D87 is a catalytic residue. D117 contacts Zn(2+). The active site involves E149. Zn(2+)-binding residues include E150, E174, and H360.

It belongs to the peptidase M20A family. ArgE subfamily. Homodimer. The cofactor is Zn(2+). Requires Co(2+) as cofactor. Glutathione serves as cofactor.

The protein resides in the cytoplasm. It catalyses the reaction N(2)-acetyl-L-ornithine + H2O = L-ornithine + acetate. It functions in the pathway amino-acid biosynthesis; L-arginine biosynthesis; L-ornithine from N(2)-acetyl-L-ornithine (linear): step 1/1. Its function is as follows. Catalyzes the hydrolysis of the amide bond of N(2)-acetylated L-amino acids. Cleaves the acetyl group from N-acetyl-L-ornithine to form L-ornithine, an intermediate in L-arginine biosynthesis pathway, and a branchpoint in the synthesis of polyamines. The sequence is that of Acetylornithine deacetylase from Yersinia pseudotuberculosis serotype O:1b (strain IP 31758).